A 632-amino-acid polypeptide reads, in one-letter code: MHYPDLFDVIVVGGGHAGVEAACAAARMGCDTLLLTQNIETIGQMSCNPSIGGIGKGHLVKEIDALDGVMARATDRAGIHWRILNRRKGAAVQATRAQADRVLYKAAVRALVEKQEHLRVFQTEVSGILLNGETVIGVSSQHKIDFHAKTVIITAGTFLGGKIYVGLNYFVGGRAGDPAALELANKLRDLPFETHRMKTGTPPRIDARSIDFSQMSEQLGDEPLPVFSYLGNVNEHPRQIPCHITHTNTQTHDIIREYIDQAPMYAGVIKDAFGPRYCPSIEDKVMRFHDKTSHQIFLEPESLTTNEIYPNGISTSLPFEAQLKYVHTIKGLEQAIITRPGYAIEYDFFNPQGLRYTLETKAIKNLFFAGQINGTTGYEEAAAQGLLAGINAALRVYDKEGWYPRRDQAYLGVLIDDLITQGTREPYRMFTSRAEHRLLLREDNADQRLTAIGYQLGCVGSARMKQFDAKMTAVAHASDQLKKLLIPADRLSGLTHNTYAAELLKRPEIDVRAVLALANVPPDEYPSDEVIEQIDIAAKYSGYIQRQYEEVAKLQKNRAQKLPVPFDYRKVTGLSAELAEKLQKVQPHDLDQAARIAGMTPAALSLLLIYFKKHTQPLSNSEKGGDCVGEKL.

13 to 18 (GGGHAG) provides a ligand contact to FAD. 274-288 (GPRYCPSIEDKVMRF) serves as a coordination point for NAD(+).

It belongs to the MnmG family. In terms of assembly, homodimer. Heterotetramer of two MnmE and two MnmG subunits. It depends on FAD as a cofactor.

Its subcellular location is the cytoplasm. Functionally, NAD-binding protein involved in the addition of a carboxymethylaminomethyl (cmnm) group at the wobble position (U34) of certain tRNAs, forming tRNA-cmnm(5)s(2)U34. This chain is tRNA uridine 5-carboxymethylaminomethyl modification enzyme MnmG, found in Dichelobacter nodosus (strain VCS1703A).